The sequence spans 895 residues: Androgen receptor (895 aa).

A modulating region spans residues 1 to 533 (MEVQLGLGRV…PIDYYFPPQK (533 aa)). Residues 1 to 562 (MEVQLGLGRV…GSCKVFFKRA (562 aa)) form an interaction with ZNF318 region. Disordered regions lie at residues 33-150 (VIQN…LSLL) and 178-211 (QQQQ…YLEG). 2 stretches are compositionally biased toward low complexity: residues 44–81 (AASA…GSPQ) and 178–200 (QQQQ…ASGA). At serine 65 the chain carries Phosphoserine; by CDK9. Serine 79 is modified (phosphoserine). Polar residues predominate over residues 201–211 (PTSSKDNYLEG). Tyrosine 208 bears the Phosphotyrosine; by CSK mark. Serine 241 is subject to Phosphoserine. Tyrosine 252 carries the phosphotyrosine; by CSK and TNK2 modification. 4 positions are modified to phosphotyrosine; by CSK: tyrosine 292, tyrosine 331, tyrosine 342, and tyrosine 347. Tyrosine 348 is modified (phosphotyrosine; by CSK and TNK2). Residue lysine 371 forms a Glycyl lysine isopeptide (Lys-Gly) (interchain with G-Cter in SUMO) linkage. A Phosphotyrosine; by CSK modification is found at tyrosine 378. Residue lysine 496 forms a Glycyl lysine isopeptide (Lys-Gly) (interchain with G-Cter in SUMO) linkage. Residues tyrosine 510 and tyrosine 527 each carry the phosphotyrosine; by CSK modification. An interaction with LPXN region spans residues 527 to 894 (YYFPPQKTCL…GKVKPIYFHT (368 aa)). The segment at residues 534 to 607 (TCLICGDEAS…AGMTLGARKL (74 aa)) is a DNA-binding region (nuclear receptor). NR C4-type zinc fingers lie at residues 535-555 (CLIC…CGSC) and 571-595 (CASR…LRKC). Residues 547 to 637 (YGALTCGSCK…TEETAQKLTV (91 aa)) are interaction with HIPK3. Residues 567-894 (QKYLCASRND…GKVKPIYFHT (328 aa)) are interaction with CCAR1. Residues 600–894 (MTLGARKLKK…GKVKPIYFHT (295 aa)) are interaction with KAT7. Serine 626 carries the post-translational modification Phosphoserine; by STK4/MST1. The region spanning 644-875 (ECQPIFLNVL…DFPEMMAEII (232 aa)) is the NR LBD domain. 17beta-hydroxy-5alpha-androstan-3-one is bound by residues asparagine 681 and arginine 728. Glycyl lysine isopeptide (Lys-Gly) (interchain with G-Cter in ubiquitin) cross-links involve residues lysine 821 and lysine 823. Residue threonine 853 coordinates 17beta-hydroxy-5alpha-androstan-3-one. Position 891 is a phosphotyrosine; by CSK (tyrosine 891).

This sequence belongs to the nuclear hormone receptor family. NR3 subfamily. As to quaternary structure, binds DNA as a homodimer. Part of a ternary complex containing AR, EFCAB6/DJBP and PARK7. Interacts with HIPK3 and NR0B2 in the presence of androgen. The ligand binding domain interacts with KAT7/HBO1 in the presence of dihydrotestosterone. Interacts with EFCAB6/DJBP, PQBP1, RANBP9, RBAK, SPDEF, SRA1, TGFB1I1 and RREB1. Interacts with ZMIZ1/ZIMP10 and ZMIZ2/ZMIP7 which both enhance its transactivation activity. Interacts with SLC30A9 and RAD54L2/ARIP4. Interacts with MACROD1 (via macro domain). Interacts via the ligand-binding domain with LXXLL and FXXLF motifs from NCOA1, NCOA2, NCOA3 and MAGEA11. Interacts (via nuclear receptor DNA binding domain and nuclear receptor ligand binding domain) with NCOA4. The AR N-terminal poly-Gln region binds Ran resulting in enhancement of AR-mediated transactivation. Ran-binding decreases as the poly-Gln length increases. Interacts with HIP1 (via coiled coil domain). Interacts (via ligand-binding domain) with TRIM68. Interacts with TNK2. Interacts with USP26. Interacts with RNF6. Interacts (regulated by RNF6 probably through polyubiquitination) with RNF14; regulates AR transcriptional activity. Interacts with PRMT2 and TRIM24. Interacts with RACK1. Interacts with RANBP10; this interaction enhances dihydrotestosterone-induced AR transcriptional activity. Interacts with PRPF6 in a hormone-independent way; this interaction enhances dihydrotestosterone-induced AR transcriptional activity. Interacts with STK4/MST1. Interacts with ZIPK/DAPK3. Interacts with LPXN. Interacts with MAK. Part of a complex containing AR, MAK and NCOA3. Interacts with CRY1. Interacts with CCAR1 and GATA2. Interacts with ZNF318. Interacts with BUD31. Interacts with ARID4A. Interacts with ARID4B. Interacts (via NR LBD domain) with ZBTB7A; the interaction is direct and androgen-dependent. Interacts with NCOR1. Interacts with NCOR2. Interacts with CRY2 in a ligand-dependent manner. Phosphorylated in prostate cancer cells in response to several growth factors including EGF. Phosphorylation is induced by c-Src kinase (CSK). Tyr-510 is one of the major phosphorylation sites and an increase in phosphorylation and Src kinase activity is associated with prostate cancer progression. Phosphorylation by TNK2 enhances the DNA-binding and transcriptional activity. Phosphorylation at Ser-65 by CDK9 regulates AR promoter selectivity and cell growth. Post-translationally, sumoylated on Lys-371 (major) and Lys-496. Ubiquitinated. Deubiquitinated by USP26. 'Lys-6' and 'Lys-27'-linked polyubiquitination by RNF6 modulates AR transcriptional activity and specificity. In terms of processing, palmitoylated by ZDHHC7 and ZDHHC21. Palmitoylation is required for plasma membrane targeting and for rapid intracellular signaling via ERK and AKT kinases and cAMP generation.

The protein resides in the nucleus. It localises to the cytoplasm. Functionally, steroid hormone receptors are ligand-activated transcription factors that regulate eukaryotic gene expression and affect cellular proliferation and differentiation in target tissues. Transcription factor activity is modulated by bound coactivator and corepressor proteins like ZBTB7A that recruits NCOR1 and NCOR2 to the androgen response elements/ARE on target genes, negatively regulating androgen receptor signaling and androgen-induced cell proliferation. Transcription activation is also down-regulated by NR0B2. Activated, but not phosphorylated, by HIPK3 and ZIPK/DAPK3. This chain is Androgen receptor (AR), found in Macaca mulatta (Rhesus macaque).